Here is an 82-residue protein sequence, read N- to C-terminus: Acyl carrier protein (82 aa).

The Carrier domain occupies 3–78 (QEIFERVKKV…KAVEHISEKV (76 aa)). Position 38 is an O-(pantetheine 4'-phosphoryl)serine (Ser38).

This sequence belongs to the acyl carrier protein (ACP) family. Post-translationally, 4'-phosphopantetheine is transferred from CoA to a specific serine of apo-ACP by AcpS. This modification is essential for activity because fatty acids are bound in thioester linkage to the sulfhydryl of the prosthetic group.

The protein resides in the cytoplasm. The protein operates within lipid metabolism; fatty acid biosynthesis. Functionally, carrier of the growing fatty acid chain in fatty acid biosynthesis. The chain is Acyl carrier protein from Gloeothece citriformis (strain PCC 7424) (Cyanothece sp. (strain PCC 7424)).